Consider the following 980-residue polypeptide: Thrombospondin-4 (980 aa).

An N-terminal signal peptide occupies residues 1–42 (MTMITPSSKLTLTKGNKSWSSTRCGAFLLLHLVLQPWQRAGA). In terms of domain architecture, Laminin G-like spans 43 to 210 (QATPQVFDLL…LEELKLVVRG (168 aa)). Positions 304–343 (PTRRCDSSPCFRGVRCTDTRDGFQCGPCPDGYTGNGITCS) constitute an EGF-like 1 domain. Cystine bridges form between C308/C319, C313/C328, C331/C342, C348/C359, C353/C368, C371/C395, C401/C412, C406/C421, C424/C436, C442/C456, C450/C466, C468/C480, C496/C501, C506/C526, C542/C562, C565/C585, C601/C621, C624/C644, C662/C682, C702/C722, and C738/C959. Residues 344–381 (DVDECKYHPCYPGVRCTNLAPGFRCDACPVGFTGPMVQ) form the EGF-like 2; calcium-binding domain. An EGF-like 3; calcium-binding domain is found at 397 to 434 (DVDECRNGACVLNSICINTLGSYRCGPCKPGYTGDQTR). Positions 438-481 (TERSCRNPEQNPCSVHAQCIEERQGDVTCVCGVGWAGRAGYVCG) constitute an EGF-like 4 domain. 8 TSP type-3 repeats span residues 482-514 (KDVDIDSYPDEELPCSARNCKKDNCKYVPNSGQ), 515-550 (EDADRDGIGDACDEDADGDGILNEQDNCVLTHNVDQ), 551-573 (RNTDKDIFGDACDNCRGVLNNDQ), 574-609 (KDTDGDGKGDACDDDMDGDGIKNILDNCPRVPNRDQ), 610-632 (QDRDGDGVGDACDSCPDVSNPNQ), 633-670 (SDVDNDLVGDSCDTNQDSDGDGHQDSTDNCPTVINSAQ), 671-710 (LDTDKDGIGDECDDDDDNDGMPDLFPPGPDNCRLVPNPAQ), and 711-746 (EDSNNDGVGDICEADFDQDKVIDRIDVCPENAEITL). A disordered region spans residues 596–691 (NILDNCPRVP…CDDDDDNDGM (96 aa)). The segment covering 605-615 (PNRDQQDRDGD) has biased composition (basic and acidic residues). N631 is a glycosylation site (N-linked (GlcNAc...) asparagine). Residues 659–671 (TDNCPTVINSAQL) show a composition bias toward polar residues. Residues 679 to 690 (GDECDDDDDNDG) show a composition bias toward acidic residues. In terms of domain architecture, TSP C-terminal spans 750–964 (RAYQTVVLDP…LKYRCNDTIP (215 aa)). An N-linked (GlcNAc...) asparagine glycan is attached at N960.

This sequence belongs to the thrombospondin family. Homopentamer; disulfide-linked. Interacts with PTBP3. Interacts (via EGF-like 3; calcium-binding domain) with ATF6 and facilitates its processing, activation and nuclear translocation. Interacts with NOTCH1. As to expression, mainly expressed in astrocytes, and in ressponse to peripheral nerve injury, significantly up-regulated in the dorsal spinal cord (at protein level).

It is found in the endoplasmic reticulum. Its subcellular location is the sarcoplasmic reticulum. It localises to the secreted. The protein localises to the extracellular space. The protein resides in the extracellular matrix. Adhesive glycoprotein that mediates cell-to-cell and cell-to-matrix interactions and is involved in various processes including cellular proliferation, migration, adhesion and attachment, inflammatory response to CNS injury, regulation of vascular inflammation and adaptive responses of the heart to pressure overload and in myocardial function and remodeling. Binds to structural extracellular matrix (ECM) proteins and modulates the ECM in response to tissue damage, contributing to cardioprotective and adaptive ECM remodeling. Plays a role in ER stress response, via its interaction with the activating transcription factor 6 alpha (ATF6) which produces adaptive ER stress response factors and protects myocardium from pressure overload. May contribute to spinal presynaptic hypersensitivity and neuropathic pain states after peripheral nerve injury. May play a role in regulating protective astrogenesis from the subventricular zone (SVZ) niche after injury in a NOTCH1-dependent manner. This is Thrombospondin-4 (Thbs4) from Rattus norvegicus (Rat).